Consider the following 507-residue polypeptide: Protein adenylyltransferase fic-1 (507 aa).

Residues 40 to 56 (YSLTTVVLVSLVVTLVC) traverse the membrane as a helical segment. 2 TPR repeats span residues 146 to 179 (AILA…APNN) and 180 to 213 (PQIL…DPGN). Residues 269-274 (TVAIEG) carry the Inhibitory (S/T)XXXE(G/N) motif motif. ATP is bound at residue Glu-273. A Fido domain is found at 325 to 460 (ISIDDILEMH…LRPFVRYVAK (136 aa)). Thr-351 carries the O-AMP-threonine; by autocatalysis modification. 356–359 (VGKF) is an ATP binding site. The active site involves His-403. ATP-binding positions include 407–414 (DGNGRTAR), 439–440 (YY), and Asn-447. An O-AMP-threonine; by autocatalysis modification is found at Thr-475. The tract at residues 482–507 (NGEEPNLTAEESKVSEKIETECRAGS) is disordered. Residues 491–507 (EESKVSEKIETECRAGS) show a composition bias toward basic and acidic residues.

This sequence belongs to the fic family. Forms homodimers; homodimerization might be required for adenylyltransferase activity.

The protein localises to the endoplasmic reticulum membrane. It is found in the nucleus membrane. The enzyme catalyses L-tyrosyl-[protein] + ATP = O-(5'-adenylyl)-L-tyrosyl-[protein] + diphosphate. It catalyses the reaction L-threonyl-[protein] + ATP = 3-O-(5'-adenylyl)-L-threonyl-[protein] + diphosphate. The catalysed reaction is 3-O-(5'-adenylyl)-L-threonyl-[protein] + H2O = L-threonyl-[protein] + AMP + H(+). With respect to regulation, the side chain of Glu-273 determines which of the two opposing activities (AMPylase or de-AMPylase) will take place. In response to endoplasmic reticulum stress, mediates de-AMPylase activity. Adenylyltransferase activity is inhibited by the inhibitory helix present at the N-terminus: Glu-273 binds ATP and competes with ATP-binding at Arg-414, thereby preventing adenylyltransferase activity. In unstressed cells, disengagement of Glu-273 promotes adenylyltransferase activity. Activation dissociates ATP-binding from Glu-273, allowing ordered binding of the entire ATP moiety with the alpha-phosphate in an orientation that is productive for accepting an incoming target hydroxyl side chain. Functionally, protein that can both mediate the addition of adenosine 5'-monophosphate (AMP) to specific residues of target proteins (AMPylation), and the removal of the same modification from target proteins (de-AMPylation), depending on the context. The side chain of Glu-273 determines which of the two opposing activities (AMPylase or de-AMPylase) will take place. Adenylyltransferase that mediates the addition of adenosine 5'-monophosphate (AMP) to specific residues of target proteins. In vivo target proteins include the heat-shock 70 family proteins hsp-1 and hsp-3 and the translation elongation factors eef-1A, eef-1G and eef-2. Can AMPylate core histone H3 in vitro. Can also act as a phosphodiesterase by mediating removal of ATP (de-AMPylation) from target proteins. Decreases susceptibility to P.aeruginosa-mediated killing and might therefore play a role in the innate immune response. In Caenorhabditis briggsae, this protein is Protein adenylyltransferase fic-1 (fic-1).